The sequence spans 181 residues: Heavy metal-associated isoprenylated plant protein 46 (181 aa).

In terms of domain architecture, HMA spans 2–71 (KQKILIRVTM…KVAFAELVSV (70 aa)). Residues 74 to 121 (VEPPKKEDEKKGGDGKGAEGKGGDQKGGDKKGPDDKEPPEPKPVPCYP) are disordered. The segment covering 75–113 (EPPKKEDEKKGGDGKGAEGKGGDQKGGDKKGPDDKEPPE) has biased composition (basic and acidic residues). The residue at position 178 (C178) is a Cysteine methyl ester. C178 carries the S-farnesyl cysteine lipid modification. Positions 179-181 (KIM) are cleaved as a propeptide — removed in mature form.

This sequence belongs to the HIPP family.

Its function is as follows. Probable heavy-metal-binding protein. The sequence is that of Heavy metal-associated isoprenylated plant protein 46 from Arabidopsis thaliana (Mouse-ear cress).